Consider the following 239-residue polypeptide: Suppressor of organelle fusion 1 (239 aa).

It belongs to the WD repeat WDR91 family. In terms of assembly, interacts with sorf-2; the interaction is direct. Interacts with bec-1.

The protein localises to the early endosome. The protein resides in the late endosome. It localises to the cytoplasm. In terms of biological role, together with sorf-2 negatively regulates the levels of phosphatidylinositol 3-phosphate (PtdIns3P) to enable the conversion of early endosomes to late endosomes. Binds to sorf-2 and the sorf-1-sorf-2 complex likely acts through bec-1, a non-catalytic subunit of phosphatidylinositol 3-kinase (PI3K), to suppress PI3K activity, thereby negatively regulating endosomal PtdIns3P levels. The sequence is that of Suppressor of organelle fusion 1 from Caenorhabditis elegans.